An 854-amino-acid chain; its full sequence is Protein unc-33 (854 aa).

Disordered regions lie at residues 57–114 (ETVS…IPAP), 130–327 (ELFG…DGNG), and 794–854 (VERV…TGFW). Polar residues-rich tracts occupy residues 58-68 (TVSNKSRSSEG) and 75-97 (RPNS…TSAR). A compositionally biased stretch (basic and acidic residues) spans 193 to 202 (KVLRGEKSTP). Positions 240-257 (VDDEEEPEAEAQEMEEPQ) are enriched in acidic residues. Positions 279–298 (HPSEDGDSTRNGETPTDRRN) are enriched in basic and acidic residues. The segment covering 802-811 (SSQQQKPQQN) has biased composition (polar residues). Positions 816–827 (NSGDFDRNRTKV) are enriched in basic and acidic residues.

Belongs to the metallo-dependent hydrolases superfamily. Hydantoinase/dihydropyrimidinase family. In terms of assembly, isoform a: Probable monomer. Isoform b: Probable homodimer. Isoform c: Probable homodimer. Probable heterodimer composed of isoform b and isoform c. Interacts with unc-14 and kinesin-1 motor complex light chain klc-1; both interactions regulate unc-33 neurite localization. Interacts with fln-1 (via calponin-homology (CH) domains and filamin repeat 18-19). Isoform c: Interacts with vab-8 isoform a. In terms of tissue distribution, expressed in ventral cord and nerve ring (at protein level). Isoform a: Expressed in nerve ring (at protein level). Expressed in the nervous system, two amphid socket cells and weakly in non-neuronal pharyngeal cells.

Its subcellular location is the cell projection. The protein resides in the axon. The protein localises to the dendrite. During neurogenesis, plays an essential role in axonal guidance and outgrowth by regulating the polarization of both microtubule and actin cytoskeletons. Establishes the asymmetry of axonal and dendrite microtubules and the polarized sorting of neuronal proteins. This is achieved in part by regulating the localization of kinesin-like protein unc-104. In neurons without a distal microtubule-organizing center (MTOC), also controls the organization of microtubules in dendrites. During the dorso-ventral axonal guidance and outgrowth of VD neurons, required downstream of Rac GTPases ced-10 and mig-2 to inhibit growth cone filopodial protrusion mediated by the unc-6/netrin receptor unc-40-unc-5. Specifically, regulates growth cone filopodial protrusion polarity, and thus migration, by promoting F-actin polarization and by restricting plus-end microtubule accumulation in the growth cone. Probably downstream of mab-20/Sema2a and mab-20 receptor plx-2, regulates the guidance of DD/VD neuron axons by modulating fln-1 interaction with F-actin which results in the remodeling of the actin cytoskeleton. In hermaphrodites, involved in sex myoblast (SM) migration by regulating the gonad-dependent repulsion of SMs. Functionally, in neurons, required for the polarized sorting of axonal proteins. In PLM neuron, regulates innexin unc-9 gap junction turnover by suppressing unc-9 transport out of gap junctions. Plays a role in locomotion and egg-laying. Its function is as follows. In PLM neuron, regulates innexin unc-9 gap junction turnover by suppressing unc-9 transport out of gap junctions. This Caenorhabditis elegans protein is Protein unc-33.